We begin with the raw amino-acid sequence, 1029 residues long: Exportin-T (1029 aa).

This sequence belongs to the exportin family.

Its subcellular location is the nucleus. It localises to the cytoplasm. Its function is as follows. tRNA nucleus export receptor which facilitates tRNA translocation across the nuclear pore complex. Involved in pre-tRNA splicing, probably by affecting the interaction of pre-tRNA with splicing endonuclease. This Aspergillus clavatus (strain ATCC 1007 / CBS 513.65 / DSM 816 / NCTC 3887 / NRRL 1 / QM 1276 / 107) protein is Exportin-T (los1).